The following is a 486-amino-acid chain: Glutamate--tRNA ligase (486 aa).

The 'HIGH' region signature appears at 11 to 21 (PSPTGLLHIGN). Residues 255-259 (KLSKR) carry the 'KMSKS' region motif. An ATP-binding site is contributed by Lys-258.

The protein belongs to the class-I aminoacyl-tRNA synthetase family. Glutamate--tRNA ligase type 1 subfamily. Monomer.

Its subcellular location is the cytoplasm. The catalysed reaction is tRNA(Glu) + L-glutamate + ATP = L-glutamyl-tRNA(Glu) + AMP + diphosphate. In terms of biological role, catalyzes the attachment of glutamate to tRNA(Glu) in a two-step reaction: glutamate is first activated by ATP to form Glu-AMP and then transferred to the acceptor end of tRNA(Glu). In Streptococcus pneumoniae (strain Hungary19A-6), this protein is Glutamate--tRNA ligase.